A 551-amino-acid polypeptide reads, in one-letter code: Dihydroxy-acid dehydratase (551 aa).

Residue aspartate 78 coordinates Mg(2+). Residue cysteine 119 participates in [2Fe-2S] cluster binding. Residues aspartate 120 and lysine 121 each contribute to the Mg(2+) site. An N6-carboxylysine modification is found at lysine 121. Cysteine 191 provides a ligand contact to [2Fe-2S] cluster. Position 441 (glutamate 441) interacts with Mg(2+). Serine 467 functions as the Proton acceptor in the catalytic mechanism.

It belongs to the IlvD/Edd family. In terms of assembly, homodimer. [2Fe-2S] cluster serves as cofactor. Mg(2+) is required as a cofactor.

The enzyme catalyses (2R)-2,3-dihydroxy-3-methylbutanoate = 3-methyl-2-oxobutanoate + H2O. It carries out the reaction (2R,3R)-2,3-dihydroxy-3-methylpentanoate = (S)-3-methyl-2-oxopentanoate + H2O. The protein operates within amino-acid biosynthesis; L-isoleucine biosynthesis; L-isoleucine from 2-oxobutanoate: step 3/4. Its pathway is amino-acid biosynthesis; L-valine biosynthesis; L-valine from pyruvate: step 3/4. Functions in the biosynthesis of branched-chain amino acids. Catalyzes the dehydration of (2R,3R)-2,3-dihydroxy-3-methylpentanoate (2,3-dihydroxy-3-methylvalerate) into 2-oxo-3-methylpentanoate (2-oxo-3-methylvalerate) and of (2R)-2,3-dihydroxy-3-methylbutanoate (2,3-dihydroxyisovalerate) into 2-oxo-3-methylbutanoate (2-oxoisovalerate), the penultimate precursor to L-isoleucine and L-valine, respectively. The chain is Dihydroxy-acid dehydratase from Pyrococcus furiosus (strain ATCC 43587 / DSM 3638 / JCM 8422 / Vc1).